Reading from the N-terminus, the 494-residue chain is DnaJ homolog subfamily C member 7 (494 aa).

Residue Ala2 is modified to N-acetylalanine. TPR repeat units lie at residues 28–61 (AESF…CPNN), 62–95 (ASYY…DDSF), 96–129 (VRGH…DHKN), 142–175 (VMEY…APAC), 210–243 (ADAL…APDH), 256–289 (LKAK…DPNN), 294–327 (AKLY…DDTY), and 328–361 (IKAY…EKTK). One can recognise a J domain in the interval 381–451 (DYYKILGVDK…KKKTRYDSGQ (71 aa)). Ser393 carries the post-translational modification Phosphoserine.

As to quaternary structure, associates with complexes containing chaperones HSP70 and HSP90. Interacts with the GAP domain of NF1. Interacts with HSP90AA1. Interacts with HSPA1A/B; the interaction is enhanced by ATP. Interacts with HSP90AB1. Interacts with PGR. Interacts with RAD9A; the interaction is interrupted by UV and heat shock treatments. Interacts with HUS1 and RAD1. Interacts with NR1I3; this complex may also include HSP90 Interacts with HSPA8. Widely expressed with high levels in liver, skeletal muscle, kidney and testis.

The protein localises to the cytoplasm. It localises to the nucleus. It is found in the cytoskeleton. Functionally, acts as a co-chaperone regulating the molecular chaperones HSP70 and HSP90 in folding of steroid receptors, such as the glucocorticoid receptor and the progesterone receptor. Proposed to act as a recycling chaperone by facilitating the return of chaperone substrates to early stages of chaperoning if further folding is required. In vitro, induces ATP-independent dissociation of HSP90 but not of HSP70 from the chaperone-substrate complexes. Recruits NR1I3 to the cytoplasm. This is DnaJ homolog subfamily C member 7 (Dnajc7) from Mus musculus (Mouse).